Consider the following 60-residue polypeptide: MAVQQNKKSRSARDMRRSHDALESNALSVEKSTGEVHLRHHVSPDGFYRGRKVVDKGSDE.

The tract at residues 1–60 (MAVQQNKKSRSARDMRRSHDALESNALSVEKSTGEVHLRHHVSPDGFYRGRKVVDKGSDE) is disordered. The span at 11-22 (SARDMRRSHDAL) shows a compositional bias: basic and acidic residues.

The protein belongs to the bacterial ribosomal protein bL32 family.

This Pseudomonas aeruginosa (strain LESB58) protein is Large ribosomal subunit protein bL32.